We begin with the raw amino-acid sequence, 206 residues long: Ribosomal RNA large subunit methyltransferase E (206 aa).

Glycine 61, tryptophan 63, aspartate 81, aspartate 97, and aspartate 122 together coordinate S-adenosyl-L-methionine. Catalysis depends on lysine 162, which acts as the Proton acceptor.

Belongs to the class I-like SAM-binding methyltransferase superfamily. RNA methyltransferase RlmE family.

It localises to the cytoplasm. It carries out the reaction uridine(2552) in 23S rRNA + S-adenosyl-L-methionine = 2'-O-methyluridine(2552) in 23S rRNA + S-adenosyl-L-homocysteine + H(+). Specifically methylates the uridine in position 2552 of 23S rRNA at the 2'-O position of the ribose in the fully assembled 50S ribosomal subunit. The chain is Ribosomal RNA large subunit methyltransferase E from Neisseria meningitidis serogroup C (strain 053442).